The following is a 265-amino-acid chain: tRNA pseudouridine synthase A (265 aa).

Catalysis depends on Asp-52, which acts as the Nucleophile. Residue Tyr-105 coordinates substrate.

Belongs to the tRNA pseudouridine synthase TruA family.

It carries out the reaction uridine(38/39/40) in tRNA = pseudouridine(38/39/40) in tRNA. Formation of pseudouridine at positions 38, 39 and 40 in the anticodon stem and loop of transfer RNAs. The chain is tRNA pseudouridine synthase A from Archaeoglobus fulgidus (strain ATCC 49558 / DSM 4304 / JCM 9628 / NBRC 100126 / VC-16).